Here is a 1057-residue protein sequence, read N- to C-terminus: Carbamoyl phosphate synthase large chain (1057 aa).

Positions 1–401 (MPKRDDIKTI…SLLKAIRSLE (401 aa)) are carboxyphosphate synthetic domain. Residues arginine 129, arginine 169, glycine 175, glycine 176, lysine 208, isoleucine 210, glutamate 215, glycine 241, isoleucine 242, histidine 243, glutamine 284, and glutamate 298 each contribute to the ATP site. One can recognise an ATP-grasp 1 domain in the interval 133 to 327 (RTLMNDLNVP…IAKLAAKIAV (195 aa)). 3 residues coordinate Mg(2+): glutamine 284, glutamate 298, and asparagine 300. Glutamine 284, glutamate 298, and asparagine 300 together coordinate Mn(2+). The interval 402–546 (YGVHHLGLSN…YGTYEYENES (145 aa)) is oligomerization domain. Residues 547 to 929 (IVTDKEKILV…ALYKGLTGSG (383 aa)) form a carbamoyl phosphate synthetic domain region. The region spanning 671–861 (EALLREIAVP…MAQLAMRAIM (191 aa)) is the ATP-grasp 2 domain. Residues arginine 707, arginine 746, leucine 748, glutamate 752, glycine 777, valine 778, histidine 779, serine 780, glutamine 820, and glutamate 832 each contribute to the ATP site. The Mg(2+) site is built by glutamine 820, glutamate 832, and asparagine 834. Positions 820, 832, and 834 each coordinate Mn(2+). Residues 930–1057 (FEVKDHGTVL…ESMTFTMRNV (128 aa)) form the MGS-like domain. The allosteric domain stretch occupies residues 930 to 1057 (FEVKDHGTVL…ESMTFTMRNV (128 aa)).

Belongs to the CarB family. As to quaternary structure, composed of two chains; the small (or glutamine) chain promotes the hydrolysis of glutamine to ammonia, which is used by the large (or ammonia) chain to synthesize carbamoyl phosphate. Tetramer of heterodimers (alpha,beta)4. Mg(2+) serves as cofactor. Mn(2+) is required as a cofactor.

It catalyses the reaction hydrogencarbonate + L-glutamine + 2 ATP + H2O = carbamoyl phosphate + L-glutamate + 2 ADP + phosphate + 2 H(+). The enzyme catalyses hydrogencarbonate + NH4(+) + 2 ATP = carbamoyl phosphate + 2 ADP + phosphate + 2 H(+). The protein operates within amino-acid biosynthesis; L-arginine biosynthesis; carbamoyl phosphate from bicarbonate: step 1/1. Its pathway is pyrimidine metabolism; UMP biosynthesis via de novo pathway; (S)-dihydroorotate from bicarbonate: step 1/3. In terms of biological role, large subunit of the glutamine-dependent carbamoyl phosphate synthetase (CPSase). CPSase catalyzes the formation of carbamoyl phosphate from the ammonia moiety of glutamine, carbonate, and phosphate donated by ATP, constituting the first step of 2 biosynthetic pathways, one leading to arginine and/or urea and the other to pyrimidine nucleotides. The large subunit (synthetase) binds the substrates ammonia (free or transferred from glutamine from the small subunit), hydrogencarbonate and ATP and carries out an ATP-coupled ligase reaction, activating hydrogencarbonate by forming carboxy phosphate which reacts with ammonia to form carbamoyl phosphate. This chain is Carbamoyl phosphate synthase large chain, found in Staphylococcus epidermidis (strain ATCC 12228 / FDA PCI 1200).